Reading from the N-terminus, the 121-residue chain is Small ribosomal subunit protein uS13 (121 aa).

Residues 94 to 121 (GLPVRGQRTRTNARTRKGPRKGAAALKK) form a disordered region.

It belongs to the universal ribosomal protein uS13 family. In terms of assembly, part of the 30S ribosomal subunit. Forms a loose heterodimer with protein S19. Forms two bridges to the 50S subunit in the 70S ribosome.

Its function is as follows. Located at the top of the head of the 30S subunit, it contacts several helices of the 16S rRNA. In the 70S ribosome it contacts the 23S rRNA (bridge B1a) and protein L5 of the 50S subunit (bridge B1b), connecting the 2 subunits; these bridges are implicated in subunit movement. Contacts the tRNAs in the A and P-sites. The polypeptide is Small ribosomal subunit protein uS13 (Verminephrobacter eiseniae (strain EF01-2)).